The following is a 320-amino-acid chain: Cytochrome f (320 aa).

An N-terminal signal peptide occupies residues 1 to 35; sequence MQTRNAFSWLKKQITRSISVSLMIYILTRTSISSA. Residues tyrosine 36, cysteine 56, cysteine 59, and histidine 60 each contribute to the heme site. The helical transmembrane segment at 286–306 threads the bilayer; it reads VQGLLFFLASVILAQIFLVLK.

The protein belongs to the cytochrome f family. In terms of assembly, the 4 large subunits of the cytochrome b6-f complex are cytochrome b6, subunit IV (17 kDa polypeptide, petD), cytochrome f and the Rieske protein, while the 4 small subunits are PetG, PetL, PetM and PetN. The complex functions as a dimer. Heme is required as a cofactor.

The protein resides in the plastid. It is found in the chloroplast thylakoid membrane. Component of the cytochrome b6-f complex, which mediates electron transfer between photosystem II (PSII) and photosystem I (PSI), cyclic electron flow around PSI, and state transitions. The polypeptide is Cytochrome f (Nicotiana sylvestris (Wood tobacco)).